Reading from the N-terminus, the 155-residue chain is MIDLGISKIALIGAVALIVIGPEKLPRLARTVGTLLGKAQRYVNDVKQEVNRSMELDEFKKMKESVEDAARDVENSIRTGASDFEKSWSETTGSTSSDALPGFEAFPEYRNPKKKWRLKRGATPQWFKARSGIRTKAQSGAARVARFRPQPSRKA.

A helical membrane pass occupies residues methionine 1 to glycine 21. Disordered regions lie at residues alanine 81–phenylalanine 103 and serine 131–alanine 155. Residues serine 89–aspartate 98 show a composition bias toward polar residues.

It belongs to the TatB family. As to quaternary structure, the Tat system comprises two distinct complexes: a TatABC complex, containing multiple copies of TatA, TatB and TatC subunits, and a separate TatA complex, containing only TatA subunits. Substrates initially bind to the TatABC complex, which probably triggers association of the separate TatA complex to form the active translocon.

The protein localises to the cell inner membrane. Functionally, part of the twin-arginine translocation (Tat) system that transports large folded proteins containing a characteristic twin-arginine motif in their signal peptide across membranes. Together with TatC, TatB is part of a receptor directly interacting with Tat signal peptides. TatB may form an oligomeric binding site that transiently accommodates folded Tat precursor proteins before their translocation. The protein is Sec-independent protein translocase protein TatB of Polaromonas naphthalenivorans (strain CJ2).